We begin with the raw amino-acid sequence, 459 residues long: ATP synthase subunit beta (459 aa).

Residue 149–156 (GGAGVGKT) coordinates ATP.

This sequence belongs to the ATPase alpha/beta chains family. As to quaternary structure, F-type ATPases have 2 components, CF(1) - the catalytic core - and CF(0) - the membrane proton channel. CF(1) has five subunits: alpha(3), beta(3), gamma(1), delta(1), epsilon(1). CF(0) has three main subunits: a(1), b(2) and c(9-12). The alpha and beta chains form an alternating ring which encloses part of the gamma chain. CF(1) is attached to CF(0) by a central stalk formed by the gamma and epsilon chains, while a peripheral stalk is formed by the delta and b chains.

The protein resides in the cell inner membrane. It catalyses the reaction ATP + H2O + 4 H(+)(in) = ADP + phosphate + 5 H(+)(out). Functionally, produces ATP from ADP in the presence of a proton gradient across the membrane. The catalytic sites are hosted primarily by the beta subunits. The sequence is that of ATP synthase subunit beta from Pseudomonas syringae pv. tomato (strain ATCC BAA-871 / DC3000).